Consider the following 27-residue polypeptide: uncharacterized protein (27 aa).

It localises to the plastid. Its subcellular location is the chloroplast. This is an uncharacterized protein from Anthoceros angustus (Hornwort).